Consider the following 334-residue polypeptide: YbbR-like domain-containing protein BB_0009 (334 aa).

A helical transmembrane segment spans residues 22–38 (AISILIAILMFVAFNFN). 2 YbbR-like domains span residues 43 to 128 (ITTE…NVLL) and 138 to 220 (VKIE…VVNI).

It localises to the membrane. The protein is YbbR-like domain-containing protein BB_0009 of Borreliella burgdorferi (strain ATCC 35210 / DSM 4680 / CIP 102532 / B31) (Borrelia burgdorferi).